The sequence spans 116 residues: MSNIIKQIEQEQLKQNVPSFRPGDTLEVKVWVVEGSKRRLQAFEGVVIAIRNRGLHSAFTLRKVSNGVGVERVFQTHSPVVDSISVKRKGAVRKAKLYYLRERSGKSARIKERLGE.

The protein belongs to the bacterial ribosomal protein bL19 family.

In terms of biological role, this protein is located at the 30S-50S ribosomal subunit interface and may play a role in the structure and function of the aminoacyl-tRNA binding site. This chain is Large ribosomal subunit protein bL19, found in Actinobacillus pleuropneumoniae serotype 5b (strain L20).